Reading from the N-terminus, the 181-residue chain is Keratin-associated protein 4-5 (181 aa).

26 tandem repeats follow at residues 5 to 9 (CCGSV), 20 to 24 (CCRPS), 25 to 29 (CCQTT), 30 to 34 (CCRTT), 35 to 39 (CCRPS), 40 to 44 (CCKPQ), 45 to 49 (CCQSV), 55 to 59 (CCHPS), 60 to 64 (CCISS), 65 to 69 (CCRPY), 70 to 74 (CCESS), 75 to 79 (CCRPC), 80 to 84 (CCQTT), 85 to 89 (CCRTT), 90 to 94 (CCRTT), 95 to 99 (CCCPS), 100 to 104 (CCVSS), 105 to 109 (CCRPQ), 110 to 114 (CCQSV), 115 to 119 (CCQPT), 120 to 124 (CCRPS), 125 to 129 (CCISS), 130 to 134 (CCHPS), 135 to 139 (CCESS), 140 to 144 (CCRPC), and 145 to 149 (CCVRP). The interval 5 to 154 (CCGSVSSEQS…CCVRPVCGRV (150 aa)) is 26 X 5 AA repeats of C-C-[GRQVCHIEK]-[SPTR]-[VSTQYC].

This sequence belongs to the KRTAP type 4 family. In terms of assembly, interacts with hair keratins. Expressed in the hair follicles.

In the hair cortex, hair keratin intermediate filaments are embedded in an interfilamentous matrix, consisting of hair keratin-associated proteins (KRTAP), which are essential for the formation of a rigid and resistant hair shaft through their extensive disulfide bond cross-linking with abundant cysteine residues of hair keratins. The matrix proteins include the high-sulfur and high-glycine-tyrosine keratins. In Homo sapiens (Human), this protein is Keratin-associated protein 4-5 (KRTAP4-5).